Consider the following 263-residue polypeptide: MARGPKKHLKRVAAPKHWMLDKLTGVFAPRPSTGPHKLRECLPLIVFLRNRLKYALTGDEVKKICMQRFIKIDGKVRVDITYPAGFMDVISIEKTGEHFRLVYDTKGRFAVHRITVEEAKYKLCKVRKITVGTKGIPHLVTHDARTIRYPDPLIKVNDTVQIDLGTGKITSFIKFDTGNVCMVIGGANLGRVGVVTNRERHPGSCDVVHVKDANGNSFATRISNIFVIGNGNKPWISLPRGKGIRLTIAEERDKRLAAKQSSG.

The S4 RNA-binding domain maps to 42–104 (LPLIVFLRNR…TGEHFRLVYD (63 aa)).

It belongs to the eukaryotic ribosomal protein eS4 family.

This Pan troglodytes (Chimpanzee) protein is Small ribosomal subunit protein eS4, Y isoform 2 (RPS4Y2).